Reading from the N-terminus, the 117-residue chain is Holo-[acyl-carrier-protein] synthase (117 aa).

The Mg(2+) site is built by aspartate 8 and glutamate 59.

The protein belongs to the P-Pant transferase superfamily. AcpS family. Requires Mg(2+) as cofactor.

Its subcellular location is the cytoplasm. It catalyses the reaction apo-[ACP] + CoA = holo-[ACP] + adenosine 3',5'-bisphosphate + H(+). Functionally, transfers the 4'-phosphopantetheine moiety from coenzyme A to a Ser of acyl-carrier-protein. This Staphylococcus carnosus (strain TM300) protein is Holo-[acyl-carrier-protein] synthase.